The chain runs to 270 residues: Expansin-B10 (270 aa).

An N-terminal signal peptide occupies residues M1–C31. N41 carries an N-linked (GlcNAc...) asparagine glycan. In terms of domain architecture, Expansin-like EG45 spans G70–K176. Intrachain disulfides connect C73/C101, C104/C171, and C109/C115. An Expansin-like CBD domain is found at N188–A269.

This sequence belongs to the expansin family. Expansin B subfamily. In terms of tissue distribution, expressed in pollen.

The protein localises to the secreted. Its subcellular location is the cell wall. The protein resides in the membrane. May aid fertilization by loosening the cell wall of the stigma and style, thereby facilitating penetration of the pollen tube. Acts selectively on grass cell walls, which are relatively poor in pectins and xyloglucans and rich in glucuronoarabinoxylans and (1-3),(1-4)-beta-D-glucans, when compared with cell walls of other angiosperms, including other monocots. This Zea mays (Maize) protein is Expansin-B10 (EXPB10).